Reading from the N-terminus, the 623-residue chain is Phosphoglucomutase, chloroplastic (623 aa).

Residues 1-63 (MTSTYTRFDT…SSSSSSVVAG (63 aa)) constitute a chloroplast transit peptide. Positions 88 and 181 each coordinate alpha-D-glucose 1,6-bisphosphate. Ser-181 serves as the catalytic Phosphoserine intermediate. Mg(2+)-binding residues include Ser-181, Asp-346, Asp-348, and Asp-350. Ser-181 is subject to Phosphoserine. Positions 350, 351, 414, 433, 435, and 446 each coordinate alpha-D-glucose 1,6-bisphosphate.

This sequence belongs to the phosphohexose mutase family. Monomer. It depends on Mg(2+) as a cofactor. As to expression, expressed in flowers, siliques and germinating seeds.

It localises to the plastid. It is found in the chloroplast. It carries out the reaction alpha-D-glucose 1-phosphate = alpha-D-glucose 6-phosphate. The enzyme catalyses O-phospho-L-seryl-[protein] + alpha-D-glucose 1-phosphate = alpha-D-glucose 1,6-bisphosphate + L-seryl-[protein]. It catalyses the reaction alpha-D-glucose 1,6-bisphosphate + L-seryl-[protein] = O-phospho-L-seryl-[protein] + alpha-D-glucose 6-phosphate. With respect to regulation, inhibited by the Calvin cycle intermediates fructose-1,6-bisphosphate and ribulose-1,5-bisphosphate. Its function is as follows. Catalyzes the reversible isomerization of alpha-D-glucose 1-phosphate to alpha-D-glucose 6-phosphate. The mechanism proceeds via the intermediate compound alpha-D-glucose 1,6-bisphosphate. This enzyme participates in both the breakdown and synthesis of glucose. Factor that affects seed oil content. Accumulated starch in young embryos may play an important role in providing carbon resources for seed storage lipid biosynthesis in oilseed plants. Promotes gravitropic responses, negative in shoots but positive in roots, by facilitating starch granules (statoliths) formation in hypocotyls and roots columella. In Arabidopsis thaliana (Mouse-ear cress), this protein is Phosphoglucomutase, chloroplastic.